A 380-amino-acid chain; its full sequence is Putative 8-amino-7-oxononanoate synthase (380 aa).

Arg18 is a binding site for substrate. 106–107 (GY) lines the pyridoxal 5'-phosphate pocket. Residue His131 coordinates substrate. Pyridoxal 5'-phosphate contacts are provided by residues Ser179, 205-208 (DEAH), and 236-239 (TFGK). Lys239 bears the N6-(pyridoxal phosphate)lysine mark. Substrate is bound at residue Thr352.

This sequence belongs to the class-II pyridoxal-phosphate-dependent aminotransferase family. BioF subfamily. As to quaternary structure, homodimer. Requires pyridoxal 5'-phosphate as cofactor.

The enzyme catalyses 6-carboxyhexanoyl-[ACP] + L-alanine + H(+) = (8S)-8-amino-7-oxononanoate + holo-[ACP] + CO2. The protein operates within cofactor biosynthesis; biotin biosynthesis. Its function is as follows. Catalyzes the decarboxylative condensation of pimeloyl-[acyl-carrier protein] and L-alanine to produce 8-amino-7-oxononanoate (AON), [acyl-carrier protein], and carbon dioxide. This chain is Putative 8-amino-7-oxononanoate synthase (bioF), found in Neisseria gonorrhoeae (strain ATCC 700825 / FA 1090).